The chain runs to 275 residues: L-aspartate dehydrogenase (275 aa).

2 residues coordinate NAD(+): A130 and N196. H226 is an active-site residue.

This sequence belongs to the L-aspartate dehydrogenase family.

The enzyme catalyses L-aspartate + NADP(+) + H2O = oxaloacetate + NH4(+) + NADPH + H(+). It carries out the reaction L-aspartate + NAD(+) + H2O = oxaloacetate + NH4(+) + NADH + H(+). Its pathway is cofactor biosynthesis; NAD(+) biosynthesis; iminoaspartate from L-aspartate (dehydrogenase route): step 1/1. Its function is as follows. Specifically catalyzes the NAD or NADP-dependent dehydrogenation of L-aspartate to iminoaspartate. The protein is L-aspartate dehydrogenase of Ruegeria pomeroyi (strain ATCC 700808 / DSM 15171 / DSS-3) (Silicibacter pomeroyi).